The primary structure comprises 179 residues: Large ribosomal subunit protein uL5 (179 aa).

Belongs to the universal ribosomal protein uL5 family. In terms of assembly, part of the 50S ribosomal subunit; part of the 5S rRNA/L5/L18/L25 subcomplex. Contacts the 5S rRNA and the P site tRNA. Forms a bridge to the 30S subunit in the 70S ribosome.

This is one of the proteins that bind and probably mediate the attachment of the 5S RNA into the large ribosomal subunit, where it forms part of the central protuberance. In the 70S ribosome it contacts protein S13 of the 30S subunit (bridge B1b), connecting the 2 subunits; this bridge is implicated in subunit movement. Contacts the P site tRNA; the 5S rRNA and some of its associated proteins might help stabilize positioning of ribosome-bound tRNAs. In Desulfotalea psychrophila (strain LSv54 / DSM 12343), this protein is Large ribosomal subunit protein uL5.